Consider the following 428-residue polypeptide: tRNA(Ile)-lysidine synthase (428 aa).

Residue 28–33 coordinates ATP; sequence SGGVDS.

It belongs to the tRNA(Ile)-lysidine synthase family.

The protein resides in the cytoplasm. The catalysed reaction is cytidine(34) in tRNA(Ile2) + L-lysine + ATP = lysidine(34) in tRNA(Ile2) + AMP + diphosphate + H(+). Ligates lysine onto the cytidine present at position 34 of the AUA codon-specific tRNA(Ile) that contains the anticodon CAU, in an ATP-dependent manner. Cytidine is converted to lysidine, thus changing the amino acid specificity of the tRNA from methionine to isoleucine. This chain is tRNA(Ile)-lysidine synthase, found in Streptococcus pyogenes serotype M3 (strain ATCC BAA-595 / MGAS315).